We begin with the raw amino-acid sequence, 223 residues long: Type 3 secretion system stator protein (223 aa).

This sequence belongs to the SctL stator family. The core secretion machinery of the T3SS is composed of approximately 20 different proteins, including cytoplasmic components, a base, an export apparatus and a needle. This subunit is part of the cytosolic complex. Interacts directly with YscN/SctN (T3SS ATPase) and YscQ/SctQ (the major sorting platform component). Forms homodimers.

The protein localises to the cytoplasm. Its function is as follows. Component of the type III secretion system (T3SS), also called injectisome, which is used to inject bacterial effector proteins into eukaryotic host cells. Acts as a regulator of the YscN/SctN ATPase activity. Overexpression of YscL/SctL abolishes type III secretion and down-regulates the expression of secretion apparatus components. The polypeptide is Type 3 secretion system stator protein (Yersinia enterocolitica).